A 299-amino-acid chain; its full sequence is ATP synthase gamma chain (299 aa).

The protein belongs to the ATPase gamma chain family. In terms of assembly, F-type ATPases have 2 components, CF(1) - the catalytic core - and CF(0) - the membrane proton channel. CF(1) has five subunits: alpha(3), beta(3), gamma(1), delta(1), epsilon(1). CF(0) has three main subunits: a, b and c.

It localises to the cell membrane. Produces ATP from ADP in the presence of a proton gradient across the membrane. The gamma chain is believed to be important in regulating ATPase activity and the flow of protons through the CF(0) complex. The protein is ATP synthase gamma chain of Clavibacter michiganensis subsp. michiganensis (strain NCPPB 382).